The chain runs to 452 residues: Coiled-coil domain-containing protein 71 (452 aa).

The tract at residues 81-106 is disordered; it reads PSQTKLQARAPTPAATSPPASAPQTA. Low complexity predominate over residues 87–106; the sequence is QARAPTPAATSPPASAPQTA. At serine 129 the chain carries Phosphoserine. 2 disordered regions span residues 209 to 256 and 322 to 404; these read PLKV…GLQS and AREV…LGPG. The stretch at 279-344 forms a coiled coil; sequence KAAQAKAACA…QAKAKVARTQ (66 aa). Positions 332–344 are enriched in low complexity; it reads KAVQAKAKVARTQ. Over residues 377–386 the composition is skewed to basic and acidic residues; the sequence is RTEEAKDLSP.

This Bos taurus (Bovine) protein is Coiled-coil domain-containing protein 71 (CCDC71).